Reading from the N-terminus, the 269-residue chain is RBPJ-interacting and tubulin-associated protein 1 (269 aa).

Residues V5–V17 carry the Nuclear export signal motif. 2 disordered regions span residues G67–P94 and P145–K269. Low complexity predominate over residues S79–T93. Positions L92–S108 match the Nuclear localization signal motif. The interaction with RBPJ/RBPSUH stretch occupies residues W128–P156. An interaction with tubulin region spans residues P156–K269. 2 stretches are compositionally biased toward polar residues: residues L202–T220 and V247–K269.

Belongs to the RITA family. As to quaternary structure, interacts with RBPJ/RBPSUH.

It is found in the cytoplasm. Its subcellular location is the nucleus. The protein resides in the cytoskeleton. It localises to the microtubule organizing center. The protein localises to the centrosome. In terms of biological role, tubulin-binding protein that acts as a negative regulator of Notch signaling pathway. Shuttles between the cytoplasm and the nucleus and mediates the nuclear export of RBPJ/RBPSUH, thereby preventing the interaction between RBPJ/RBPSUH and NICD product of Notch proteins (Notch intracellular domain), leading to down-regulate Notch-mediated transcription. May play a role in neurogenesis. This is RBPJ-interacting and tubulin-associated protein 1 (RITA1) from Bos taurus (Bovine).